A 242-amino-acid chain; its full sequence is Small ribosomal subunit protein uS7m (242 aa).

The transit peptide at 1 to 37 (MAAPALRAPLRWSGLALGVRCAVWNLPGLTQVRGSRY) directs the protein to the mitochondrion. K228 bears the N6-acetyllysine mark.

This sequence belongs to the universal ribosomal protein uS7 family. Component of the mitochondrial ribosome small subunit (28S) which comprises a 12S rRNA and about 30 distinct proteins.

The protein resides in the mitochondrion. The protein is Small ribosomal subunit protein uS7m (Mrps7) of Mus musculus (Mouse).